A 486-amino-acid chain; its full sequence is Glycogen synthase (486 aa).

Lys-15 is a binding site for ADP-alpha-D-glucose.

It belongs to the glycosyltransferase 1 family. Bacterial/plant glycogen synthase subfamily.

The enzyme catalyses [(1-&gt;4)-alpha-D-glucosyl](n) + ADP-alpha-D-glucose = [(1-&gt;4)-alpha-D-glucosyl](n+1) + ADP + H(+). Its pathway is glycan biosynthesis; glycogen biosynthesis. Its function is as follows. Synthesizes alpha-1,4-glucan chains using ADP-glucose. The sequence is that of Glycogen synthase from Thermotoga petrophila (strain ATCC BAA-488 / DSM 13995 / JCM 10881 / RKU-1).